A 367-amino-acid polypeptide reads, in one-letter code: tRNA/tmRNA (uracil-C(5))-methyltransferase (367 aa).

Positions 190, 218, 223, 239, and 299 each coordinate S-adenosyl-L-methionine. Cysteine 324 acts as the Nucleophile in catalysis. Residue glutamate 358 is the Proton acceptor of the active site.

Belongs to the class I-like SAM-binding methyltransferase superfamily. RNA M5U methyltransferase family. TrmA subfamily.

The enzyme catalyses uridine(54) in tRNA + S-adenosyl-L-methionine = 5-methyluridine(54) in tRNA + S-adenosyl-L-homocysteine + H(+). It catalyses the reaction uridine(341) in tmRNA + S-adenosyl-L-methionine = 5-methyluridine(341) in tmRNA + S-adenosyl-L-homocysteine + H(+). Dual-specificity methyltransferase that catalyzes the formation of 5-methyluridine at position 54 (m5U54) in all tRNAs, and that of position 341 (m5U341) in tmRNA (transfer-mRNA). In Serratia proteamaculans (strain 568), this protein is tRNA/tmRNA (uracil-C(5))-methyltransferase.